A 535-amino-acid chain; its full sequence is uncharacterized protein (535 aa).

A helical transmembrane segment spans residues 17-37 (IVLLCMIGFFCTTFMRIHFAL). Asparagine 44 and asparagine 61 each carry an N-linked (GlcNAc...) asparagine glycan. The next 6 membrane-spanning stretches (helical) occupy residues 107–127 (LIFSGTFWGSLITVLPSMFFI), 144–164 (ILVTVITPFLATHFGYFSVFL), 167–187 (IGMGLGEGFVFPTNNAIIGNW), 199–219 (IFTLGNQIASAAGSPMVAAVC), 225–245 (WPATFYFAGIFATGWSILWFF), and 292–312 (AFLGQLQCHFFVNLFMTLFQI). Residue asparagine 329 is glycosylated (N-linked (GlcNAc...) asparagine). 5 helical membrane passes run 331–351 (TFTAIPNIFNMIFKVVWGIGI), 368–388 (VSHGVASFGSSFSLILLAFFV), 395–415 (TGLIFFCLMYSSMGTFVSGFY), 429–451 (MSAISMFVAMIGRLTTPAVMSMF), and 463–483 (IFIGCSLAHIFSGSIFLLFGS).

Belongs to the major facilitator superfamily. Sodium/anion cotransporter family.

The protein localises to the membrane. This is an uncharacterized protein from Caenorhabditis elegans.